The sequence spans 350 residues: Galactokinase (350 aa).

14 to 17 is a substrate binding site; it reads EHTD. Residues Ser-46 and 96–102 contribute to the ATP site; that span reads GAGLSSS. Ser-102 and Glu-134 together coordinate Mg(2+). Asp-146 functions as the Proton acceptor in the catalytic mechanism. Position 196 (Tyr-196) interacts with substrate.

This sequence belongs to the GHMP kinase family. GalK subfamily.

The protein localises to the cytoplasm. It carries out the reaction alpha-D-galactose + ATP = alpha-D-galactose 1-phosphate + ADP + H(+). The protein operates within carbohydrate metabolism; galactose metabolism. In terms of biological role, catalyzes the transfer of the gamma-phosphate of ATP to D-galactose to form alpha-D-galactose-1-phosphate (Gal-1-P). The sequence is that of Galactokinase from Thermotoga neapolitana.